The primary structure comprises 510 residues: uncharacterized protein (510 aa).

4 disordered regions span residues 1–154 (MGSP…ATFL), 208–227 (DGNH…GDLA), 234–276 (TRES…QGIL), and 368–480 (NFYT…GCPR). Ser43 carries the post-translational modification Phosphoserine. A compositionally biased stretch (polar residues) spans 50 to 60 (PLVSQQDTSEA). Over residues 78 to 92 (EEERLGSPEDEKMDG) the composition is skewed to basic and acidic residues. Ser84 is modified (phosphoserine). 2 stretches are compositionally biased toward polar residues: residues 97–109 (SQPS…QVAN) and 118–135 (QPSS…SNRR). Ser120 is modified (phosphoserine). Over residues 139–151 (ASGSEEAKAASAA) the composition is skewed to low complexity. The span at 243–255 (SSLLTTTRGLTSG) shows a compositional bias: low complexity. Residues 379–395 (RTKELQLVAKEDTDSTR) are compositionally biased toward basic and acidic residues. Polar residues predominate over residues 414-441 (SVHQEFSSGDINTRSLQDPGNSQSSGLS).

This is an uncharacterized protein from Rattus norvegicus (Rat).